We begin with the raw amino-acid sequence, 283 residues long: NADPH-dependent 7-cyano-7-deazaguanine reductase (283 aa).

90 to 92 (IES) serves as a coordination point for substrate. 92–93 (SK) lines the NADPH pocket. The active-site Thioimide intermediate is Cys190. The Proton donor role is filled by Asp197. A substrate-binding site is contributed by 229–230 (HE). Position 258–259 (258–259 (RG)) interacts with NADPH.

The protein belongs to the GTP cyclohydrolase I family. QueF type 2 subfamily. As to quaternary structure, homodimer.

The protein resides in the cytoplasm. The catalysed reaction is 7-aminomethyl-7-carbaguanine + 2 NADP(+) = 7-cyano-7-deazaguanine + 2 NADPH + 3 H(+). Its pathway is tRNA modification; tRNA-queuosine biosynthesis. Functionally, catalyzes the NADPH-dependent reduction of 7-cyano-7-deazaguanine (preQ0) to 7-aminomethyl-7-deazaguanine (preQ1). The sequence is that of NADPH-dependent 7-cyano-7-deazaguanine reductase from Dechloromonas aromatica (strain RCB).